A 284-amino-acid polypeptide reads, in one-letter code: Hydrogenase expression/formation protein HupQ (284 aa).

Residues 1 to 23 are disordered; it reads MIGTQSILPPGFGPGSHGEEDRL.

Belongs to the HupH/HyaF family.

The sequence is that of Hydrogenase expression/formation protein HupQ (hupQ) from Azotobacter chroococcum mcd 1.